Consider the following 126-residue polypeptide: Aspartate 1-decarboxylase (126 aa).

The active-site Schiff-base intermediate with substrate; via pyruvic acid is S25. Pyruvic acid (Ser) is present on S25. T57 lines the substrate pocket. Y58 (proton donor) is an active-site residue. Residue 73–75 coordinates substrate; it reads GAA.

Belongs to the PanD family. In terms of assembly, heterooctamer of four alpha and four beta subunits. The cofactor is pyruvate. Post-translationally, is synthesized initially as an inactive proenzyme, which is activated by self-cleavage at a specific serine bond to produce a beta-subunit with a hydroxyl group at its C-terminus and an alpha-subunit with a pyruvoyl group at its N-terminus.

It localises to the cytoplasm. It carries out the reaction L-aspartate + H(+) = beta-alanine + CO2. Its pathway is cofactor biosynthesis; (R)-pantothenate biosynthesis; beta-alanine from L-aspartate: step 1/1. Functionally, catalyzes the pyruvoyl-dependent decarboxylation of aspartate to produce beta-alanine. The protein is Aspartate 1-decarboxylase of Psychrobacter sp. (strain PRwf-1).